Reading from the N-terminus, the 274-residue chain is Pyrogallol hydroxytransferase small subunit (274 aa).

[4Fe-4S] cluster-binding residues include C13, C16, C19, C23, C68, C71, C76, C109, C126, C129, C145, and C149.

As to quaternary structure, heterodimer of a large and a small subunit. [4Fe-4S] cluster is required as a cofactor.

The catalysed reaction is 1,2,3,5-tetrahydroxybenzene + 1,2,3-trihydroxybenzene = 1,2,3,5-tetrahydroxybenzene + 1,3,5-trihydroxybenzene. Its function is as follows. Isomerization of pyrogallol to phloroglucin. The chain is Pyrogallol hydroxytransferase small subunit (bthL) from Pelobacter acidigallici.